Consider the following 79-residue polypeptide: Antimicrobial peptide ToAP2 (79 aa).

The N-terminal stretch at 1 to 23 is a signal peptide; the sequence is MQFKKQLLVIFFAYFLVVNESEA. A propeptide spanning residues 50–79 is cleaved from the precursor; the sequence is SLMKRELKNLYDPYQRSVEMERLLKELPLY.

The protein belongs to the non-disulfide-bridged peptide (NDBP) superfamily. Medium-length antimicrobial peptide (group 3) family. As to expression, expressed by the venom gland.

It localises to the secreted. Its subcellular location is the target cell membrane. Functionally, antimicrobial peptide. Shows antibacterial activity against all M.massiliense bacterial strains tested. Has antifungal activity against Candida spp. and two Cryptococcus neoformans strains with MICs values ranging from 6.25 to 200 uM. Also shows an inhibitory activity on C.albicans biofilms at high concentrations. Exhibits chemotactic activity for monocytes, neutrophils, and eosinophils. Shows low cytotoxic activity and has weak hemolytic activity on human erythrocytes. In vivo, treatment of infected mice with M.massiliense reduces the bacterial load in the liver, lung, and spleen. May act by disrupting the integrity of the bacterial cell membrane. This Tityus obscurus (Amazonian scorpion) protein is Antimicrobial peptide ToAP2.